Reading from the N-terminus, the 371-residue chain is Probable protein phosphatase 2C 11 (371 aa).

A helical transmembrane segment spans residues 29-49 (FFFFLFNSQTISSFIIFYLFL). Positions 67–95 (PPLSVAPLRGDANSPPPESSSSPATKSSL) are disordered. The segment covering 85 to 94 (SSSSPATKSS) has biased composition (low complexity). The 246-residue stretch at 123 to 368 (SYGYSSLKGK…DNITCIVVRF (246 aa)) folds into the PPM-type phosphatase domain. The Mn(2+) site is built by D159, G160, D320, and D359.

The protein belongs to the PP2C family. Mg(2+) serves as cofactor. It depends on Mn(2+) as a cofactor.

The protein localises to the membrane. The enzyme catalyses O-phospho-L-seryl-[protein] + H2O = L-seryl-[protein] + phosphate. The catalysed reaction is O-phospho-L-threonyl-[protein] + H2O = L-threonyl-[protein] + phosphate. In Arabidopsis thaliana (Mouse-ear cress), this protein is Probable protein phosphatase 2C 11.